Consider the following 418-residue polypeptide: Tryptophan synthase beta chain (418 aa).

Residues 1-12 (MTSTLPTANTPD) show a composition bias toward polar residues. Positions 1 to 21 (MTSTLPTANTPDPASLMPSVR) are disordered. At Lys-111 the chain carries N6-(pyridoxal phosphate)lysine.

This sequence belongs to the TrpB family. In terms of assembly, tetramer of two alpha and two beta chains. Pyridoxal 5'-phosphate serves as cofactor.

The enzyme catalyses (1S,2R)-1-C-(indol-3-yl)glycerol 3-phosphate + L-serine = D-glyceraldehyde 3-phosphate + L-tryptophan + H2O. It participates in amino-acid biosynthesis; L-tryptophan biosynthesis; L-tryptophan from chorismate: step 5/5. Its function is as follows. The beta subunit is responsible for the synthesis of L-tryptophan from indole and L-serine. The protein is Tryptophan synthase beta chain of Synechococcus sp. (strain CC9311).